Consider the following 191-residue polypeptide: Transposon Tn1546 resolvase (191 aa).

The region spanning 2 to 138 is the Resolvase/invertase-type recombinase catalytic domain; it reads RKIGYIRVSS…EGIELAKKEG (137 aa). Ser10 serves as the catalytic O-(5'-phospho-DNA)-serine intermediate. Residues 168–187 constitute a DNA-binding region (H-T-H motif); the sequence is VNQICEITNVSRASLYRKLS.

It belongs to the site-specific recombinase resolvase family.

Its function is as follows. Resolvase catalyzes the resolution (a site-specific recombination) of the cointegrated replicon to yield the final transposition products. The chain is Transposon Tn1546 resolvase from Enterococcus faecium (Streptococcus faecium).